The following is a 324-amino-acid chain: Phospho-N-acetylmuramoyl-pentapeptide-transferase (324 aa).

The next 10 membrane-spanning stretches (helical) occupy residues 5 to 25 (VILF…PILI), 50 to 70 (GTPT…AIVM), 77 to 97 (LSAE…LGFL), 117 to 137 (LIGQ…CHFS), 147 to 167 (LSID…VGGS), 176 to 196 (LDGL…ILAW), 203 to 223 (VAIF…FNAH), 227 to 247 (VFMG…VAIL), 250 to 270 (LEIL…SVIL), and 302 to 322 (VVVT…YIEV).

It belongs to the glycosyltransferase 4 family. MraY subfamily. Mg(2+) serves as cofactor.

The protein resides in the cell membrane. It carries out the reaction UDP-N-acetyl-alpha-D-muramoyl-L-alanyl-gamma-D-glutamyl-meso-2,6-diaminopimeloyl-D-alanyl-D-alanine + di-trans,octa-cis-undecaprenyl phosphate = di-trans,octa-cis-undecaprenyl diphospho-N-acetyl-alpha-D-muramoyl-L-alanyl-D-glutamyl-meso-2,6-diaminopimeloyl-D-alanyl-D-alanine + UMP. Its pathway is cell wall biogenesis; peptidoglycan biosynthesis. Catalyzes the initial step of the lipid cycle reactions in the biosynthesis of the cell wall peptidoglycan: transfers peptidoglycan precursor phospho-MurNAc-pentapeptide from UDP-MurNAc-pentapeptide onto the lipid carrier undecaprenyl phosphate, yielding undecaprenyl-pyrophosphoryl-MurNAc-pentapeptide, known as lipid I. This chain is Phospho-N-acetylmuramoyl-pentapeptide-transferase, found in Bacillus velezensis (strain DSM 23117 / BGSC 10A6 / LMG 26770 / FZB42) (Bacillus amyloliquefaciens subsp. plantarum).